Consider the following 477-residue polypeptide: UDP-N-acetylmuramate--L-alanine ligase (477 aa).

122–128 (GTHGKTT) lines the ATP pocket.

It belongs to the MurCDEF family.

Its subcellular location is the cytoplasm. It carries out the reaction UDP-N-acetyl-alpha-D-muramate + L-alanine + ATP = UDP-N-acetyl-alpha-D-muramoyl-L-alanine + ADP + phosphate + H(+). It functions in the pathway cell wall biogenesis; peptidoglycan biosynthesis. Cell wall formation. In Xylella fastidiosa (strain 9a5c), this protein is UDP-N-acetylmuramate--L-alanine ligase.